We begin with the raw amino-acid sequence, 246 residues long: Myelin-oligodendrocyte glycoprotein (246 aa).

Positions Met1 to Ala28 are cleaved as a signal peptide. Over Gly29–Gly153 the chain is Extracellular. The region spanning Gln30–Glu144 is the Ig-like V-type domain. Residues Cys52 and Cys126 are joined by a disulfide bond. A glycan (N-linked (GlcNAc...) asparagine) is linked at Asn59. Residues Val154–Phe174 traverse the membrane as a helical segment. At Leu175–Thr209 the chain is on the cytoplasmic side. Residues Leu210–Leu230 traverse the membrane as a helical segment. Residues His231 to Phe246 lie on the Extracellular side of the membrane.

Belongs to the immunoglobulin superfamily. BTN/MOG family. As to quaternary structure, homodimer.

The protein resides in the membrane. Functionally, minor component of the myelin sheath. May be involved in completion and/or maintenance of the myelin sheath and in cell-cell communication. Mediates homophilic cell-cell adhesion. The polypeptide is Myelin-oligodendrocyte glycoprotein (MOG) (Pongo abelii (Sumatran orangutan)).